The primary structure comprises 570 residues: Phosphoenolpyruvate-protein phosphotransferase (570 aa).

Catalysis depends on His-189, which acts as the Tele-phosphohistidine intermediate. Phosphoenolpyruvate contacts are provided by Arg-296 and Arg-332. Glu-431 and Asp-455 together coordinate Mg(2+). Phosphoenolpyruvate contacts are provided by residues 454 to 455 (ND) and Arg-465. Cys-502 (proton donor) is an active-site residue.

The protein belongs to the PEP-utilizing enzyme family. Homodimer. Mg(2+) is required as a cofactor.

Its subcellular location is the cytoplasm. The enzyme catalyses L-histidyl-[protein] + phosphoenolpyruvate = N(pros)-phospho-L-histidyl-[protein] + pyruvate. Its function is as follows. General (non sugar-specific) component of the phosphoenolpyruvate-dependent sugar phosphotransferase system (sugar PTS). This major carbohydrate active-transport system catalyzes the phosphorylation of incoming sugar substrates concomitantly with their translocation across the cell membrane. Enzyme I transfers the phosphoryl group from phosphoenolpyruvate (PEP) to the phosphoryl carrier protein (HPr). This chain is Phosphoenolpyruvate-protein phosphotransferase (ptsI), found in Buchnera aphidicola subsp. Schizaphis graminum (strain Sg).